The sequence spans 115 residues: Meromycolate extension acyl carrier protein (115 aa).

Positions V3–E81 constitute a Carrier domain. S41 bears the O-(pantetheine 4'-phosphoryl)serine mark.

It belongs to the acyl carrier protein (ACP) family. In terms of processing, 4'-phosphopantetheine is transferred from CoA to a specific serine of apo-AcpM.

The protein localises to the cytoplasm. Functionally, acyl carrier protein involved in meromycolate extension. This chain is Meromycolate extension acyl carrier protein (acpM), found in Mycobacterium bovis (strain ATCC BAA-935 / AF2122/97).